Consider the following 396-residue polypeptide: Subtelomeric hrmA-associated cluster protein AFUB_079040 (396 aa).

Disordered stretches follow at residues 1-32 (MANK…QQSL) and 347-396 (YPEN…ECGR). The span at 23-32 (SHASGSQQSL) shows a compositional bias: polar residues. Positions 367 to 380 (SKKKKDKKKKKSNK) are enriched in basic residues.

Its function is as follows. Part of the subtelomeric hrmA-associated cluster (HAC) containing genes that alter the hyphal surface (such as reduced total chitin or increased beta-glucan exposure) and perturb inter-hyphal interactions within the developing biofilms, resulting in a loss of vertically aligned polarized growing filaments. Consequently, this hypoxia-typic morphotype (called H-MORPH) with altered biofilm architecture leads to increased hypoxia fitness, increased host inflammation, rapid disease progression, and mortality in a murine model of invasive aspergillosis. This Aspergillus fumigatus (strain CBS 144.89 / FGSC A1163 / CEA10) (Neosartorya fumigata) protein is Subtelomeric hrmA-associated cluster protein AFUB_079040.